A 185-amino-acid chain; its full sequence is Large ribosomal subunit protein uL5 (185 aa).

The protein belongs to the universal ribosomal protein uL5 family. In terms of assembly, part of the 50S ribosomal subunit; part of the 5S rRNA/L5/L18/L25 subcomplex. Contacts the 5S rRNA and the P site tRNA. Forms a bridge to the 30S subunit in the 70S ribosome.

This is one of the proteins that bind and probably mediate the attachment of the 5S RNA into the large ribosomal subunit, where it forms part of the central protuberance. In the 70S ribosome it contacts protein S13 of the 30S subunit (bridge B1b), connecting the 2 subunits; this bridge is implicated in subunit movement. Contacts the P site tRNA; the 5S rRNA and some of its associated proteins might help stabilize positioning of ribosome-bound tRNAs. This is Large ribosomal subunit protein uL5 from Rhodopseudomonas palustris (strain HaA2).